Reading from the N-terminus, the 72-residue chain is Nod factor export ATP-binding protein I (72 aa).

The protein belongs to the ABC transporter superfamily. Lipooligosaccharide exporter (TC 3.A.1.102) family. As to quaternary structure, the complex is composed of two ATP-binding proteins (NodI) and two transmembrane proteins (NodJ).

The protein localises to the cell inner membrane. Functionally, part of the ABC transporter complex NodIJ involved in the export of the nodulation factors (Nod factors), the bacterial signal molecules that induce symbiosis and subsequent nodulation induction. Nod factors are LCO (lipo-chitin oligosaccharide), a modified beta-1,4-linked N-acetylglucosamine oligosaccharide. This subunit is responsible for energy coupling to the transport system. The sequence is that of Nod factor export ATP-binding protein I from Rhizobium leguminosarum bv. trifolii.